The sequence spans 681 residues: Sodium/glucose cotransporter 4 (681 aa).

Residues 1 to 36 (MSKELAAMGPGASGDGVRTETAPHIALDSRVGLHAY) lie on the Extracellular side of the membrane. A helical transmembrane segment spans residues 37-57 (DISVVVIYFVFVIAVGIWSSI). The Cytoplasmic portion of the chain corresponds to 58 to 75 (RASRGTIGGYFLAGRSMS). Residues 76 to 98 (WWPIGASLMSSNVGSGLFIGLAG) form a helical membrane-spanning segment. Residues 99 to 114 (TGAAGGLAVGGFEWNA) lie on the Extracellular side of the membrane. A helical membrane pass occupies residues 115–135 (TWLLLALGWVFVPVYIAAGVV). Residues 136-157 (TMPQYLKKRFGGQRIQVYMSVL) lie on the Cytoplasmic side of the membrane. A helical transmembrane segment spans residues 158-178 (SLILYIFTKISTDIFSGALFI). Residues 179-190 (QMALGWNLYLST) are Extracellular-facing. A helical transmembrane segment spans residues 191-211 (GILLVVTAVYTIAGGLMAVIY). Residues 212–217 (TDALQT) lie on the Cytoplasmic side of the membrane. A helical membrane pass occupies residues 218-238 (VIMVGGALVLMFLGFQDVGWY). Residues 239–275 (PGLEQRYRQAIPNVTVPNTTCHLPRPDAFHILRDPVS) lie on the Extracellular side of the membrane. A glycan (N-linked (GlcNAc...) asparagine) is linked at Asn251. The helical transmembrane segment at 276 to 296 (GDIPWPGLIFGLTVLATWCWC) threads the bilayer. Residues 297-317 (TDQVIVQRSLSAKSLSHAKGG) are Cytoplasmic-facing. Residues 318 to 338 (SVLGGYLKILPMFFIVMPGMI) traverse the membrane as a helical segment. The Extracellular segment spans residues 339–383 (SRALFPDEVGCVDPDVCQRICGARVGCSNIAYPKLVMALMPVGLR). Residues 384-406 (GLMIAVIMAALMSSLTSIFNSSS) traverse the membrane as a helical segment. At 407–427 (TLFTIDVWQRFRRKSTEQELM) the chain is on the cytoplasmic side. A helical membrane pass occupies residues 428–448 (VVGRVFVVFLVVISILWIPII). Residues 449–459 (QSSNSGQLFDY) are Extracellular-facing. The helical transmembrane segment at 460–480 (IQAVTSYLAPPITALFLLAIF) threads the bilayer. Over 481-487 (CKRVTEP) the chain is Cytoplasmic. A helical membrane pass occupies residues 488–508 (GAFWGLVFGLGVGLLRMILEF). Residues 509–530 (SYPAPACGEVDRRPAVLKDFHY) are Extracellular-facing. A helical transmembrane segment spans residues 531 to 551 (LYFAILLCGLTAIVIVIVSLC). Residues 552 to 660 (TTPIPEEQLT…SIEEEPLWRH (109 aa)) are Cytoplasmic-facing. Residues 579–591 (AHESTPEISERPA) show a composition bias toward basic and acidic residues. The interval 579–614 (AHESTPEISERPAGECPAGGGAAENSSLGQEQPEAP) is disordered. Residues Ser604 and Ser605 each carry the phosphoserine modification. Residues 661-681 (VCNINAVLLLAINIFLWGYFA) form a helical membrane-spanning segment.

It belongs to the sodium:solute symporter (SSF) (TC 2.A.21) family. In terms of tissue distribution, expressed in the small intestine, kidney and liver.

Its subcellular location is the cell membrane. The catalysed reaction is D-mannose(out) + n Na(+)(out) = D-mannose(in) + n Na(+)(in). Its function is as follows. Electrogenic Na(+)-coupled sugar symporter that may play a primary role in D-mannose and possibly D-fructose and D-glucose transport at the plasma membrane. Transporter activity is driven by a transmembrane Na(+) electrochemical gradient set by the Na(+)/K(+) pump. Exclusively recognizes sugar substrates having a pyranose ring with an axial hydroxyl group on carbon 2. This Homo sapiens (Human) protein is Sodium/glucose cotransporter 4.